The sequence spans 496 residues: Fibronectin type III and SPRY domain-containing protein 1 (496 aa).

Residues 4 to 99 are a coiled coil; the sequence is QKEALRKIIT…ALESSEELLE (96 aa). The COS domain occupies 105–162; sequence LLATDSKDFPQAAKQIKDGVTMAPAFRLSLKAKVSDNMSHLMVDFAQERRMLQALTFL. Positions 164–268 constitute a Fibronectin type-III domain; that stretch reads VPSAPVIDLT…EPVTLETPAF (105 aa). The B30.2/SPRY domain occupies 268-477; that stretch reads FMFRLDASTS…VTTGLQVPSS (210 aa). Residues 301-336 form a disordered region; that stretch reads KAREKDGKGRTASPVNSPARGTPSPKRMPSGRGGRD. Residues arginine 310 and arginine 320 each carry the omega-N-methylarginine modification.

In terms of assembly, oligomerization is required for binding to microtubules.

The protein localises to the cytoplasm. Its subcellular location is the cytoskeleton. It localises to the microtubule organizing center. It is found in the centrosome. The protein resides in the nucleus. The protein localises to the cleavage furrow. Its function is as follows. May be involved in microtubule organization and stabilization. This Bos taurus (Bovine) protein is Fibronectin type III and SPRY domain-containing protein 1 (FSD1).